Consider the following 193-residue polypeptide: NAD(P)H-quinone oxidoreductase subunit I (193 aa).

4Fe-4S ferredoxin-type domains lie at G55–E84 and K95–E124. [4Fe-4S] cluster is bound by residues C64, C67, C70, C74, C104, C107, C110, and C114. Residues L169–D193 are disordered.

Belongs to the complex I 23 kDa subunit family. In terms of assembly, NDH-1 is composed of at least 11 different subunits. [4Fe-4S] cluster is required as a cofactor.

It localises to the cellular thylakoid membrane. It carries out the reaction a plastoquinone + NADH + (n+1) H(+)(in) = a plastoquinol + NAD(+) + n H(+)(out). It catalyses the reaction a plastoquinone + NADPH + (n+1) H(+)(in) = a plastoquinol + NADP(+) + n H(+)(out). NDH-1 shuttles electrons from an unknown electron donor, via FMN and iron-sulfur (Fe-S) centers, to quinones in the respiratory and/or the photosynthetic chain. The immediate electron acceptor for the enzyme in this species is believed to be plastoquinone. Couples the redox reaction to proton translocation, and thus conserves the redox energy in a proton gradient. The polypeptide is NAD(P)H-quinone oxidoreductase subunit I (Rippkaea orientalis (strain PCC 8801 / RF-1) (Cyanothece sp. (strain PCC 8801))).